Consider the following 531-residue polypeptide: MSALLSADDLNDFISPGIACIKPTVTENRSQEASEYGEVEIQIDENGKPLEISKIDGATKNLSPAQISLADCLACSGCITSAEEILVAQHSHNELIKALKEKKTNNKIFVASISHQARASLATAYYMKVSDIDRLLVDLLVNQMGFTYVVGTGLGRKLSLINESQSVIERKEHGFQGPILSSICPGWVLYAEKTHPHVLSRISDTKSPQQITGCLLKSLTAHQLEVERDQIYHLSIMPCFDKKLESARPEQDPSLVSNDVDCVLTPKELVTLLDECKDKFSLTFDALSHSSGSLTDLYQSCAPANWPYVELSWSSDSGSSSGGYGYNYLQLLQSHLCLRDPQQYQPQNFRLESVAGRNKDIYELRLVYNDNQVASSAIVNGFRNIQNLVRKLKPTSSTTTTKTNPLVARRKARLSSKRSESGAQDVQQADASKCDYVEIMACPNGCINGGGQINSPTDEDQKLWVSKTLTRYGSIPMVDLSSDSSLTLELMAWCREFCINYNVPESRLLKTWFHEVEQPTDQAAILVGSKW.

Cys20, Cys72, Cys75, Cys78, Cys184, and Cys239 together coordinate [4Fe-4S] cluster. Residues 395 to 426 (TSSTTTTKTNPLVARRKARLSSKRSESGAQDV) are disordered. Positions 442 and 446 each coordinate [4Fe-4S] cluster.

The protein belongs to the NARF family.

Functionally, component of the cytosolic Fe/S protein assembly machinery. Required for maturation of extramitochondrial Fe/S proteins. May play a role in the transfer of pre-assembled Fe/S clusters to target apoproteins. This Meyerozyma guilliermondii (strain ATCC 6260 / CBS 566 / DSM 6381 / JCM 1539 / NBRC 10279 / NRRL Y-324) (Yeast) protein is Cytosolic Fe-S cluster assembly factor NAR1 (NAR1).